The following is an 803-amino-acid chain: Leucine--tRNA ligase (803 aa).

A 'HIGH' region motif is present at residues 40 to 51 (PYPSGAGLHVGH). The 'KMSKS' region signature appears at 575-579 (KMSKS). K578 serves as a coordination point for ATP.

Belongs to the class-I aminoacyl-tRNA synthetase family.

The protein localises to the cytoplasm. It carries out the reaction tRNA(Leu) + L-leucine + ATP = L-leucyl-tRNA(Leu) + AMP + diphosphate. In Listeria welshimeri serovar 6b (strain ATCC 35897 / DSM 20650 / CCUG 15529 / CIP 8149 / NCTC 11857 / SLCC 5334 / V8), this protein is Leucine--tRNA ligase.